Here is an 811-residue protein sequence, read N- to C-terminus: DEAD-box ATP-dependent RNA helicase 48 (811 aa).

Disordered stretches follow at residues 1–32 (MGGG…ERGL) and 93–138 (DDGP…EPRL). Basic residues predominate over residues 15-29 (WQHKRMHEKLARHKE). Basic and acidic residues-rich tracts occupy residues 95 to 104 (GPIHRADRPR) and 117 to 138 (GDRR…EPRL). Positions 286–333 (RNCDMKKERRALKSYEEENNDLAGSFRELREEIKNREVLGAERRRYES) form a coiled coil. The Q motif motif lies at 342–370 (KRFEECGISPLTVKALTDAGYVQTTVVQE). One can recognise a Helicase ATP-binding domain in the interval 373-556 (LPMCLEGKDV…QLVLKRDHVF (184 aa)). 386-393 (AKTGTGKS) contacts ATP. The short motif at 504–507 (DEAD) is the DEAD box element. The Helicase C-terminal domain occupies 570 to 740 (KVEQLYLVMP…EMKRKVDGSI (171 aa)).

The protein belongs to the DEAD box helicase family.

The enzyme catalyses ATP + H2O = ADP + phosphate + H(+). This Oryza sativa subsp. japonica (Rice) protein is DEAD-box ATP-dependent RNA helicase 48.